A 326-amino-acid polypeptide reads, in one-letter code: D-alanine--D-alanine ligase (326 aa).

In terms of domain architecture, ATP-grasp spans 114–313 (KRVWLQHGLR…YAELCVSIVS (200 aa)). 140–195 (PDRLGLPLILKPPHEGSTVGITKVAGYSDMKEGYAQAAKFDDEVLAEQFIAGRELT) contacts ATP. D267, E280, and N282 together coordinate Mg(2+).

The protein belongs to the D-alanine--D-alanine ligase family. The cofactor is Mg(2+). Requires Mn(2+) as cofactor.

It localises to the cytoplasm. It carries out the reaction 2 D-alanine + ATP = D-alanyl-D-alanine + ADP + phosphate + H(+). Its pathway is cell wall biogenesis; peptidoglycan biosynthesis. In terms of biological role, cell wall formation. This chain is D-alanine--D-alanine ligase, found in Bordetella petrii (strain ATCC BAA-461 / DSM 12804 / CCUG 43448).